A 154-amino-acid chain; its full sequence is UPF0039 protein sll0451 (154 aa).

One can recognise an N-acetyltransferase domain in the interval 8–151 (QRFNDISGEA…EHISMIFRVP (144 aa)).

This sequence belongs to the UPF0039 (ElaA) family.

The protein is UPF0039 protein sll0451 of Synechocystis sp. (strain ATCC 27184 / PCC 6803 / Kazusa).